The primary structure comprises 162 residues: Transcription elongation factor GreA (162 aa).

Positions 9 to 38 form a coiled coil; the sequence is QGYKALEEELARLKSERPEIIQAIKEAREE.

Belongs to the GreA/GreB family.

In terms of biological role, necessary for efficient RNA polymerase transcription elongation past template-encoded arresting sites. The arresting sites in DNA have the property of trapping a certain fraction of elongating RNA polymerases that pass through, resulting in locked ternary complexes. Cleavage of the nascent transcript by cleavage factors such as GreA or GreB allows the resumption of elongation from the new 3'terminus. GreA releases sequences of 2 to 3 nucleotides. This Desulfovibrio desulfuricans (strain ATCC 27774 / DSM 6949 / MB) protein is Transcription elongation factor GreA.